A 1103-amino-acid polypeptide reads, in one-letter code: Isoleucine--tRNA ligase (1103 aa).

Positions 1 to 25 are disordered; that stretch reads MSENVYPKANEGGETAHVAPNPSFP. The 'HIGH' region motif lies at 65–75; the sequence is PFANGLPHYGH. The 'KMSKS' region signature appears at 649 to 653; sequence KMSKH. Position 652 (Lys-652) interacts with ATP.

The protein belongs to the class-I aminoacyl-tRNA synthetase family. IleS type 2 subfamily. In terms of assembly, monomer. It depends on Zn(2+) as a cofactor.

It is found in the cytoplasm. It carries out the reaction tRNA(Ile) + L-isoleucine + ATP = L-isoleucyl-tRNA(Ile) + AMP + diphosphate. Functionally, catalyzes the attachment of isoleucine to tRNA(Ile). As IleRS can inadvertently accommodate and process structurally similar amino acids such as valine, to avoid such errors it has two additional distinct tRNA(Ile)-dependent editing activities. One activity is designated as 'pretransfer' editing and involves the hydrolysis of activated Val-AMP. The other activity is designated 'posttransfer' editing and involves deacylation of mischarged Val-tRNA(Ile). The protein is Isoleucine--tRNA ligase of Bifidobacterium longum (strain NCC 2705).